Reading from the N-terminus, the 361-residue chain is Septin-2 (361 aa).

Phosphotyrosine is present on Y17. The Septin-type G domain occupies K34–R306. Residues G44 to S51 are G1 motif. GTP contacts are provided by residues G44–S51, T78, G104, and K183–E191. Residues D101 to G104 are G3 motif. The tract at residues A182–D185 is G4 motif. The residue at position 190 (K190) is an N6-acetyllysine. Residue Y211 is modified to Phosphotyrosine. Position 218 is a phosphoserine (S218). Positions 241 and 256 each coordinate GTP. The tract at residues W260–H270 is important for dimerization.

The protein belongs to the TRAFAC class TrmE-Era-EngA-EngB-Septin-like GTPase superfamily. Septin GTPase family. In terms of assembly, septins polymerize into heterooligomeric protein complexes that form filaments, and associate with cellular membranes, actin filaments and microtubules. GTPase activity is required for filament formation. Filaments are assembled from asymmetrical heterotrimers, composed of SEPTIN2, SEPTIN6 and SEPTIN7 that associate head-to-head to form a hexameric unit. Interaction between SEPTIN2 and SEPTIN7 seems indirect. Interacts with SEPTIN5. Interaction with SEPTIN4 not detected. Interacts with SEPTIN9. Component of a septin core octameric complex consisting of SEPTIN12, SEPTIN7, SEPTIN6 and SEPTIN2 or SEPTIN4 in the order 12-7-6-2-2-6-7-12 or 12-7-6-4-4-6-7-12 and located in the sperm annulus. Interacts with MAP4. Interacts with DZIP1L.

The protein localises to the cytoplasm. Its subcellular location is the cytoskeleton. It is found in the spindle. It localises to the chromosome. The protein resides in the centromere. The protein localises to the kinetochore. Its subcellular location is the cleavage furrow. It is found in the midbody. It localises to the cell cortex. The protein resides in the cell projection. The protein localises to the cilium membrane. Its subcellular location is the cilium. It is found in the flagellum. Its function is as follows. Filament-forming cytoskeletal GTPase. Forms a filamentous structure with SEPTIN12, SEPTIN6, SEPTIN2 and probably SEPTIN4 at the sperm annulus which is required for the structural integrity and motility of the sperm tail during postmeiotic differentiation. Required for normal organization of the actin cytoskeleton. Plays a role in the biogenesis of polarized columnar-shaped epithelium by maintaining polyglutamylated microtubules, thus facilitating efficient vesicle transport, and by impeding MAP4 binding to tubulin. Required for the progression through mitosis. Forms a scaffold at the midplane of the mitotic splindle required to maintain CENPE localization at kinetochores and consequently chromosome congression. During anaphase, may be required for chromosome segregation and spindle elongation. Plays a role in ciliogenesis and collective cell movements. In cilia, required for the integrity of the diffusion barrier at the base of the primary cilium that prevents diffusion of transmembrane proteins between the cilia and plasma membranes: probably acts by regulating the assembly of the tectonic-like complex (also named B9 complex) by localizing TMEM231 protein. The sequence is that of Septin-2 from Bos taurus (Bovine).